The following is a 121-amino-acid chain: Small ribosomal subunit protein uS13 (121 aa).

The segment at 93-121 (RGLPMRGQRTRTNARTRKGPRKGAAALKK) is disordered.

Belongs to the universal ribosomal protein uS13 family. In terms of assembly, part of the 30S ribosomal subunit. Forms a loose heterodimer with protein S19. Forms two bridges to the 50S subunit in the 70S ribosome.

Its function is as follows. Located at the top of the head of the 30S subunit, it contacts several helices of the 16S rRNA. In the 70S ribosome it contacts the 23S rRNA (bridge B1a) and protein L5 of the 50S subunit (bridge B1b), connecting the 2 subunits; these bridges are implicated in subunit movement. Contacts the tRNAs in the A and P-sites. This is Small ribosomal subunit protein uS13 from Paracidovorax citrulli (strain AAC00-1) (Acidovorax citrulli).